The following is a 173-amino-acid chain: Crossover junction endodeoxyribonuclease RuvC (173 aa).

Catalysis depends on residues D8, E67, and D139. Mg(2+) contacts are provided by D8, E67, and D139.

It belongs to the RuvC family. In terms of assembly, homodimer which binds Holliday junction (HJ) DNA. The HJ becomes 2-fold symmetrical on binding to RuvC with unstacked arms; it has a different conformation from HJ DNA in complex with RuvA. In the full resolvosome a probable DNA-RuvA(4)-RuvB(12)-RuvC(2) complex forms which resolves the HJ. Mg(2+) serves as cofactor.

It localises to the cytoplasm. It catalyses the reaction Endonucleolytic cleavage at a junction such as a reciprocal single-stranded crossover between two homologous DNA duplexes (Holliday junction).. In terms of biological role, the RuvA-RuvB-RuvC complex processes Holliday junction (HJ) DNA during genetic recombination and DNA repair. Endonuclease that resolves HJ intermediates. Cleaves cruciform DNA by making single-stranded nicks across the HJ at symmetrical positions within the homologous arms, yielding a 5'-phosphate and a 3'-hydroxyl group; requires a central core of homology in the junction. The consensus cleavage sequence is 5'-(A/T)TT(C/G)-3'. Cleavage occurs on the 3'-side of the TT dinucleotide at the point of strand exchange. HJ branch migration catalyzed by RuvA-RuvB allows RuvC to scan DNA until it finds its consensus sequence, where it cleaves and resolves the cruciform DNA. The chain is Crossover junction endodeoxyribonuclease RuvC from Shigella flexneri serotype 5b (strain 8401).